The chain runs to 436 residues: UPF0597 protein YhaM (436 aa).

The protein belongs to the UPF0597 family.

In Shigella boydii serotype 4 (strain Sb227), this protein is UPF0597 protein YhaM.